The following is a 352-amino-acid chain: Mitochondrial ubiquitin ligase activator of NFKB 1 (352 aa).

Residues 1-8 (MESGSRPS) are Cytoplasmic-facing. Residues 9 to 29 (LGQVILLGTSSMVTAVLYSIY) traverse the membrane as a helical segment. Residues 30-238 (RQKAQVAQEL…LLHRQESSVR (209 aa)) are Mitochondrial intermembrane-facing. Lys-52 is covalently cross-linked (Glycyl lysine isopeptide (Lys-Gly) (interchain with G-Cter in ubiquitin)). Residues 239 to 259 (LWKILVLVFGFATCATLFFIL) form a helical membrane-spanning segment. Over 260-352 (RKQYLHRQER…ITRVIPLYNS (93 aa)) the chain is Cytoplasmic. Lys-299 is covalently cross-linked (Glycyl lysine isopeptide (Lys-Gly) (interchain with G-Cter in ubiquitin)). The segment at 302–340 (CVVCLSNFKSCVFLECGHVCSCRQCYLALPEPKRCPICR) adopts an RING-type zinc-finger fold.

Homooligomer. Interacts with MAP3K7/TAK1. Interacts with UBC9. Interacts with and sumoylates DNM1L. Interacts with MAVS. Interacts with TP53 (via N-terminus); the interaction leads to ubiquitination and proteasomal degradation of TP53. Ubiquitinated by PRKN during mitophagy, leading to its degradation and enhancement of mitophagy. Deubiquitinated by USP30. Expressed in cortical neurons (at protein level).

It is found in the mitochondrion outer membrane. The protein localises to the peroxisome. It carries out the reaction S-ubiquitinyl-[E2 ubiquitin-conjugating enzyme]-L-cysteine + [acceptor protein]-L-lysine = [E2 ubiquitin-conjugating enzyme]-L-cysteine + N(6)-ubiquitinyl-[acceptor protein]-L-lysine.. It functions in the pathway protein modification; protein ubiquitination. Its pathway is protein modification; protein sumoylation. In terms of biological role, exhibits weak E3 ubiquitin-protein ligase activity. E3 ubiquitin ligases accept ubiquitin from an E2 ubiquitin-conjugating enzyme in the form of a thioester and then directly transfer the ubiquitin to targeted substrates. Can ubiquitinate AKT1 preferentially at 'Lys-284' involving 'Lys-48'-linked polyubiquitination and seems to be involved in regulation of Akt signaling by targeting phosphorylated Akt to proteasomal degradation. Mediates polyubiquitination of cytoplasmic TP53 at 'Lys-27' which targets TP53 for proteasomal degradation, thus reducing TP53 levels in the cytoplasm and mitochondrion. Proposed to preferentially act as a SUMO E3 ligase at physiological concentrations. Plays a role in the control of mitochondrial morphology by promoting mitochondrial fragmentation, and influences mitochondrial localization. Likely to promote mitochondrial fission through negatively regulating the mitochondrial fusion proteins MFN1 and MFN2, acting in a pathway that is parallel to the PRKN/PINK1 regulatory pathway. May also be involved in the sumoylation of the membrane fission protein DNM1L. Inhibits cell growth. When overexpressed, activates JNK through MAP3K7/TAK1 and induces caspase-dependent apoptosis. Involved in the modulation of innate immune defense against viruses by inhibiting RIGI-dependent antiviral response. Can mediate RIGI sumoylation and disrupt its polyubiquitination. In Mus musculus (Mouse), this protein is Mitochondrial ubiquitin ligase activator of NFKB 1 (Mul1).